We begin with the raw amino-acid sequence, 479 residues long: Calcium/calmodulin-dependent protein kinase type II delta chain (479 aa).

The 259-residue stretch at 14–272 folds into the Protein kinase domain; it reads YQLFEELGKG…ASEALKHPWI (259 aa). Residues 20–28 and Lys-43 contribute to the ATP site; that span reads LGKGAFSVV. Catalysis depends on Asp-136, which acts as the Proton acceptor. Thr-287 carries the post-translational modification Phosphothreonine. A phosphoserine mark is found at Ser-315 and Ser-319. Thr-337 carries the phosphothreonine modification.

The protein belongs to the protein kinase superfamily. CAMK Ser/Thr protein kinase family. CaMK subfamily. As to quaternary structure, CAMK2 is composed of four different chains: alpha, beta, gamma, and delta. The different isoforms assemble into homo- or heteromultimeric holoenzymes composed of 8 to 12 subunits.

It catalyses the reaction L-seryl-[protein] + ATP = O-phospho-L-seryl-[protein] + ADP + H(+). The enzyme catalyses L-threonyl-[protein] + ATP = O-phospho-L-threonyl-[protein] + ADP + H(+). With respect to regulation, autophosphorylation of CAMK2 plays an important role in the regulation of the kinase activity. CaM-kinase II (CAMK2) is a prominent kinase in the central nervous system. The sequence is that of Calcium/calmodulin-dependent protein kinase type II delta chain (CAMK2D) from Gallus gallus (Chicken).